Here is a 340-residue protein sequence, read N- to C-terminus: UDP-glucose 4-epimerase (340 aa).

Residues 12-13 (FI), 32-37 (DNYGNS), 59-60 (DV), 81-85 (FAGLK), Asn100, Ser125, Tyr150, Lys154, and Phe179 contribute to the NAD(+) site. Substrate contacts are provided by Ser125 and Tyr150. Tyr150 serves as the catalytic Proton acceptor. Substrate-binding positions include Asn180, 200–201 (NL), 217–219 (QVY), Arg232, and 292–295 (RPGD).

It belongs to the NAD(P)-dependent epimerase/dehydratase family. As to quaternary structure, homodimer. NAD(+) serves as cofactor.

It catalyses the reaction UDP-alpha-D-glucose = UDP-alpha-D-galactose. It functions in the pathway carbohydrate metabolism; galactose metabolism. Functionally, involved in the metabolism of galactose. Catalyzes the conversion of UDP-galactose (UDP-Gal) to UDP-glucose (UDP-Glc) through a mechanism involving the transient reduction of NAD. Can also epimerize UDP-GalNAc to UDP-GlcNAc. Involved in the lacto-N-biose I/galacto-N-biose (LNB/GNB) degradation pathway, which is important for host intestinal colonization by bifidobacteria. The chain is UDP-glucose 4-epimerase (lnpD) from Bifidobacterium longum subsp. longum (strain ATCC 15707 / DSM 20219 / JCM 1217 / NCTC 11818 / E194b).